Here is a 582-residue protein sequence, read N- to C-terminus: Sodium-dependent low-affinity dicarboxylate transporter 1 (582 aa).

Transmembrane regions (helical) follow at residues 17-37 (SFVI…VGDS), 59-79 (ALPL…FGIM), 87-107 (AYLP…LAVE), 130-150 (VMAG…NTAT), 224-244 (LMLS…TGTA), 271-291 (IFAF…LYLL), 317-337 (FSFA…LWIL), 353-373 (EFVS…TLPE), 401-421 (FPWS…GVKE), 455-475 (TNVC…AELA), 482-502 (PLNF…LPVA), and 527-547 (VTLG…GFVF).

The protein belongs to the SLC13A/DASS transporter (TC 2.A.47) family. NADC subfamily. As to expression, nad-1 and nad-2 are coexpressed in the intestinal tract from early larvae to adults, expression is from the pharynx through to the anus. Expression level is significantly greater in the anterior half of the intestine than in the posterior half.

It is found in the membrane. Low affinity sodium-dicarboxylate cotransporter that accepts a range of tricarboxylic acid-cycle intermediates with 4-5 carbon atoms. There is no interaction with monocarboxylates. The sequence is that of Sodium-dependent low-affinity dicarboxylate transporter 1 (nac-1) from Caenorhabditis elegans.